We begin with the raw amino-acid sequence, 122 residues long: UPF0102 protein xcc-b100_3645 (122 aa).

The protein belongs to the UPF0102 family.

In Xanthomonas campestris pv. campestris (strain B100), this protein is UPF0102 protein xcc-b100_3645.